The sequence spans 417 residues: MSTRYHQAASDSYLELLKEATKRDLNLSDEDGMTPTLLAAYHGNLEALEIICSRGGDPDRCDIWGNTPLHFAASNGHAHCVSFLVNFGANIFALDNDLQTPLDAAASREQNECVALLDKAATAQNIMNPKKVTRLKEQAQKNARRQIKECERLQEKHQNKMAHTYSKEESGTLSSSKGTFSRSSPSNASAPGTFGSLSKGIKDTFKIKFKKNKDTAEQVGKEGRSGQRNVMEVFREEEEDSFSGDFKEKLQLSAEEDGSVHHESILNRPGLGSIVFRRNRISSPEDISDSKREFGFKLPSELLQRQGASEADEGAADEEGEENGLKDDLPWDDDEVEWEEDVVDATPLEVFLLSQHLEEFLPIFKREQIDLEALLLCSDEDLQSIQMQLGPRKKVLNAINRRKQVLQQPGQLVDTSL.

Positions 1 to 252 are mediates localization to microvilli; it reads MSTRYHQAAS…SGDFKEKLQL (252 aa). 3 ANK repeats span residues 31-60, 64-93, and 97-126; these read DGMT…DPDR, WGNT…NIFA, and DLQT…AQNI. Residues 130–164 are a coiled coil; it reads KKVTRLKEQAQKNARRQIKECERLQEKHQNKMAHT. Residues 151 to 195 form a disordered region; sequence ERLQEKHQNKMAHTYSKEESGTLSSSKGTFSRSSPSNASAPGTFG. Residues 171–190 show a composition bias toward polar residues; the sequence is GTLSSSKGTFSRSSPSNASA. A mediates interaction with MYO7B region spans residues 253–346; it reads SAEEDGSVHH…EWEEDVVDAT (94 aa). Position 283 is a phosphoserine (Ser283). The interval 305 to 330 is disordered; the sequence is RQGASEADEGAADEEGEENGLKDDLP. Acidic residues predominate over residues 310–322; the sequence is EADEGAADEEGEE. The region spanning 351-403 is the SAM domain; it reads FLLSQHLEEFLPIFKREQIDLEALLLCSDEDLQSIQMQLGPRKKVLNAINRRK. The PDZ-binding; mediates interaction with USH1C signature appears at 415-417; the sequence is TSL.

In terms of assembly, part of the IMAC/intermicrovillar adhesion complex/intermicrovillar tip-link complex composed of ANKS4B, MYO7B, USH1C, CDHR2 and CDHR5. Interacts with USH1C; the interaction is direct and is required for ANKS4B localization to the tip of microvilli. Interacts with MYO7B; the interaction is direct. May interact with HSPA5. In terms of tissue distribution, expressed in kidney and small intestine.

It is found in the cell projection. It localises to the microvillus. As part of the intermicrovillar adhesion complex/IMAC plays a role in epithelial brush border differentiation, controlling microvilli organization and length. Plays a role in assembly of the complex. May play a role in cellular response to endoplasmic reticulum stress. The protein is Ankyrin repeat and SAM domain-containing protein 4B of Homo sapiens (Human).